We begin with the raw amino-acid sequence, 182 residues long: Meiotic recombination protein REC104 (182 aa).

Interacts with REC114 and SPO11.

Potential transcriptional regulator that is required to activate expression of a number of early meiotic genes including HOP1. The protein is Meiotic recombination protein REC104 (REC104) of Saccharomyces cerevisiae (strain ATCC 204508 / S288c) (Baker's yeast).